Reading from the N-terminus, the 146-residue chain is uncharacterized protein (146 aa).

A helical membrane pass occupies residues 7–27 (FVLSITIVLVILIIIAFIWYN).

This sequence belongs to the asfivirus E146L family.

It is found in the host membrane. It localises to the virion. This is an uncharacterized protein from Ornithodoros (relapsing fever ticks).